Here is a 558-residue protein sequence, read N- to C-terminus: Zinc finger protein piragua (558 aa).

The 80-residue stretch at 15-94 (STCRLCHHNT…QEREQSLQEQ (80 aa)) folds into the ZAD domain. Zn(2+)-binding residues include cysteine 17, cysteine 20, cysteine 67, and cysteine 70. Positions 132–177 (LAESSEEEFALGSDGEYENYDDDDEEEEEDYDEEDEEDGQNGEDVD) are enriched in acidic residues. Positions 132-178 (LAESSEEEFALGSDGEYENYDDDDEEEEEDYDEEDEEDGQNGEDVDM) are disordered. 9 C2H2-type zinc fingers span residues 208–231 (FLCQYCDLGFTLPAECQEHELAAH), 237–260 (YCCNFCNIKLVTRPALISHIKTLH), 266–288 (YVCAHCRKGFVRRSDLKKHTIVH), 294–316 (FTCNVCSKSFSRNTNLTKHMRIH), 322–344 (FVCQQCPRSFQTAVEMMRHTRSH), 350–372 (FQCGRCPYSFSRRDKLIAHQQVH), 414–436 (YHCDVCDRTFQRERDLQRHQALH), 441–464 (FACKTCNQGFNRREQLQRHELEAH), and 468–490 (FTCGICCISFLHQIELENHLKVH).

Its function is as follows. May be involved in transcriptional regulation. The function of this protein is unclear. According to one report, it is required for development and viability since mutants display defects in several developmental morphogenetic processes including dorsal closure and head involution, and die by the first instar larval stage. It may also be involved in fwe-mediated cellular competition. However, according to another report, it is not required for development or viability since mutants have no visible phenotype and are fertile. The protein is Zinc finger protein piragua of Drosophila melanogaster (Fruit fly).